The chain runs to 444 residues: Probable D-serine dehydratase (444 aa).

N6-(pyridoxal phosphate)lysine is present on Lys118.

It belongs to the serine/threonine dehydratase family. DsdA subfamily. The cofactor is pyridoxal 5'-phosphate.

It catalyses the reaction D-serine = pyruvate + NH4(+). The sequence is that of Probable D-serine dehydratase from Acinetobacter baumannii (strain ATCC 17978 / DSM 105126 / CIP 53.77 / LMG 1025 / NCDC KC755 / 5377).